A 173-amino-acid chain; its full sequence is Probable chemoreceptor glutamine deamidase CheD 2 (173 aa).

Belongs to the CheD family.

The enzyme catalyses L-glutaminyl-[protein] + H2O = L-glutamyl-[protein] + NH4(+). Probably deamidates glutamine residues to glutamate on methyl-accepting chemotaxis receptors (MCPs), playing an important role in chemotaxis. The sequence is that of Probable chemoreceptor glutamine deamidase CheD 2 from Albidiferax ferrireducens (strain ATCC BAA-621 / DSM 15236 / T118) (Rhodoferax ferrireducens).